A 428-amino-acid chain; its full sequence is 3-phosphoshikimate 1-carboxyvinyltransferase (428 aa).

Residues Lys20, Ser21, and Arg25 each coordinate 3-phosphoshikimate. Lys20 is a binding site for phosphoenolpyruvate. Phosphoenolpyruvate is bound by residues Gly92 and Arg120. Positions 166, 168, 314, and 341 each coordinate 3-phosphoshikimate. Residue Gln168 participates in phosphoenolpyruvate binding. The active-site Proton acceptor is Asp314. Phosphoenolpyruvate contacts are provided by Arg345 and Arg387.

The protein belongs to the EPSP synthase family. Monomer.

The protein resides in the cytoplasm. The enzyme catalyses 3-phosphoshikimate + phosphoenolpyruvate = 5-O-(1-carboxyvinyl)-3-phosphoshikimate + phosphate. It functions in the pathway metabolic intermediate biosynthesis; chorismate biosynthesis; chorismate from D-erythrose 4-phosphate and phosphoenolpyruvate: step 6/7. In terms of biological role, catalyzes the transfer of the enolpyruvyl moiety of phosphoenolpyruvate (PEP) to the 5-hydroxyl of shikimate-3-phosphate (S3P) to produce enolpyruvyl shikimate-3-phosphate and inorganic phosphate. The chain is 3-phosphoshikimate 1-carboxyvinyltransferase from Listeria monocytogenes serotype 4b (strain CLIP80459).